The chain runs to 234 residues: Purine nucleoside phosphorylase DeoD-type (234 aa).

His5 serves as a coordination point for a purine D-ribonucleoside. Residues Gly21, Arg25, Arg44, and 88–91 (RIGS) contribute to the phosphate site. A purine D-ribonucleoside-binding positions include 180-182 (EME) and 204-205 (SD). The active-site Proton donor is Asp205.

Belongs to the PNP/UDP phosphorylase family. In terms of assembly, homohexamer; trimer of homodimers.

The catalysed reaction is a purine D-ribonucleoside + phosphate = a purine nucleobase + alpha-D-ribose 1-phosphate. It carries out the reaction a purine 2'-deoxy-D-ribonucleoside + phosphate = a purine nucleobase + 2-deoxy-alpha-D-ribose 1-phosphate. Its function is as follows. Catalyzes the reversible phosphorolytic breakdown of the N-glycosidic bond in the beta-(deoxy)ribonucleoside molecules, with the formation of the corresponding free purine bases and pentose-1-phosphate. The protein is Purine nucleoside phosphorylase DeoD-type of Colwellia psychrerythraea (strain 34H / ATCC BAA-681) (Vibrio psychroerythus).